The chain runs to 1273 residues: DNA-directed RNA polymerase subunit beta (1273 aa).

It belongs to the RNA polymerase beta chain family. In terms of assembly, the RNAP catalytic core consists of 2 alpha, 1 beta, 1 beta' and 1 omega subunit. When a sigma factor is associated with the core the holoenzyme is formed, which can initiate transcription.

It carries out the reaction RNA(n) + a ribonucleoside 5'-triphosphate = RNA(n+1) + diphosphate. In terms of biological role, DNA-dependent RNA polymerase catalyzes the transcription of DNA into RNA using the four ribonucleoside triphosphates as substrates. The polypeptide is DNA-directed RNA polymerase subunit beta (Onion yellows phytoplasma (strain OY-M)).